A 78-amino-acid polypeptide reads, in one-letter code: Cytochrome c oxidase subunit 6b-3 (78 aa).

Positions 22-65 constitute a CHCH domain; that stretch reads TRHCFTRYIEFHRCTTAKGEDANECERFAKYYRALCPGEWVDKW. The short motif at 25 to 35 is the Cx9C motif element; that stretch reads CFTRYIEFHRC. 2 disulfides stabilise this stretch: C25–C57 and C35–C46. Positions 46–57 match the Cx10C motif motif; it reads CERFAKYYRALC.

The protein belongs to the cytochrome c oxidase subunit 6B (TC 3.D.4.8) family. In terms of tissue distribution, expressed in the whole plant.

It localises to the mitochondrion. In terms of biological role, this protein is one of the nuclear-coded polypeptide chains of cytochrome c oxidase, the terminal oxidase in mitochondrial electron transport. This protein may be one of the heme-binding subunits of the oxidase. The sequence is that of Cytochrome c oxidase subunit 6b-3 (COX6B-3) from Arabidopsis thaliana (Mouse-ear cress).